The primary structure comprises 1025 residues: Interferon-induced helicase C domain-containing protein 1 (1025 aa).

2 CARD domains span residues 7 to 97 (AEDS…YVKP) and 110 to 190 (AHDE…QTGN). Residues lysine 23 and lysine 43 each participate in a glycyl lysine isopeptide (Lys-Gly) (interchain with G-Cter in ISG15) cross-link. The segment at 273–297 (SLGHNSNMGRDSGTMGSDSDESVIQ) is disordered. A compositionally biased stretch (polar residues) spans 275 to 297 (GHNSNMGRDSGTMGSDSDESVIQ). Phosphoserine occurs at positions 289, 291, and 302. Positions 317–510 (AQPALDGKNI…SEAEKHILNI (194 aa)) constitute a Helicase ATP-binding domain. A phosphoserine mark is found at serine 645 and serine 648. Residues 700 to 872 (KLIKLRNTIL…NMKPEEYAHK (173 aa)) enclose the Helicase C-terminal domain. Serine 828 bears the Phosphoserine; by RIOK3 mark. In terms of domain architecture, RLR CTR spans 893 to 1020 (AKQYNDNPSL…PDLDYSEYCL (128 aa)). 4 residues coordinate Zn(2+): cysteine 907, cysteine 910, cysteine 962, and cysteine 964.

The protein belongs to the helicase family. RLR subfamily. Monomer in the absence of ligands and homodimerizes in the presence of dsRNA ligands. Can assemble into helical or linear polymeric filaments on long dsRNA. Interacts with MAVS/IPS1. Interacts (via the CARD domains) with TKFC, the interaction is inhibited by viral infection. Interacts with PCBP2. Interacts with NLRC5. Interacts with PIAS2-beta. Interacts with DDX60. Interacts with ANKRD17. Interacts with IKBKE. Interacts with ATG5 and ATG12, either as ATG5 and ATG12 monomers or as ATG12-ATG5 conjugates. Interacts with ZCCHC3; leading to activate IFIH1/MDA5. Interacts with RNF123. Interacts with DDX3X. Interacts with NOD1; this interaction promotes transcription of antiviral genes and inhibition of viral replication. Interacts with ECSIT; this interaction bridges IFIH1 to the MAVS complex at the mitochondrion. In terms of processing, during apoptosis, processed into 3 cleavage products. The helicase-containing fragment, once liberated from the CARD domains, translocate from the cytoplasm to the nucleus. The processed protein significantly sensitizes cells to DNA degradation. Sumoylated. Sumoylation positively regulates its role in type I interferon induction and is enhanced by PIAS2-beta. Post-translationally, ubiquitinated by RNF125, leading to its degradation by the proteasome. USP17/UPS17L2-dependent deubiquitination positively regulates the receptor. Ubiquitinated by TRIM25 via 'Lys-63'-linked ubiquitination, promoting activation of IFIH1/MDA5. Ubiquitinated by TRIM40 via 'Lys-48'-linked ubiquitination; leading to proteasomal degradation. Ubiquitinated by TRIM65 via 'Lys-63'-linked ubiquitination, promoting activation of IFIH1/MDA5. In terms of processing, ISGylated by ISG15. ISGylation increases upon infection with viruses. ISGylation at Lys-23 and Lys-43 is dependent of dephosphorylation, regulates mitochondrial translocation and oligomerization. Essential for IFIH1/MDA5-mediated cytokine responses and restriction of virus replication. Phosphorylated. Dephosphorylated by phsophatases PP1; dephosphorylation precedes and is required for ISGylation. As to expression, expression is prominent in lung, liver, kidney, heart and spleen (at protein level). Widely expressed at low level.

The protein localises to the cytoplasm. It localises to the nucleus. It is found in the mitochondrion. The catalysed reaction is ATP + H2O = ADP + phosphate + H(+). In terms of biological role, innate immune receptor which acts as a cytoplasmic sensor of viral nucleic acids and plays a major role in sensing viral infection and in the activation of a cascade of antiviral responses including the induction of type I interferons and pro-inflammatory cytokines. Its ligands include mRNA lacking 2'-O-methylation at their 5' cap and long-dsRNA (&gt;1 kb in length). Upon ligand binding it associates with mitochondria antiviral signaling protein (MAVS/IPS1) which activates the IKK-related kinases: TBK1 and IKBKE which phosphorylate interferon regulatory factors: IRF3 and IRF7 which in turn activate transcription of antiviral immunological genes, including interferons (IFNs); IFN-alpha and IFN-beta. Responsible for detecting the Picornaviridae family members such as encephalomyocarditis virus (EMCV), mengo encephalomyocarditis virus (ENMG), and theiler's murine encephalomyelitis virus (TMEV). Can also detect other viruses such as dengue virus (DENV), west Nile virus (WNV), and reovirus. Also involved in antiviral signaling in response to viruses containing a dsDNA genome, such as vaccinia virus. Plays an important role in amplifying innate immune signaling through recognition of RNA metabolites that are produced during virus infection by ribonuclease L (RNase L). May play an important role in enhancing natural killer cell function and may be involved in growth inhibition and apoptosis in several tumor cell lines. This is Interferon-induced helicase C domain-containing protein 1 from Mus musculus (Mouse).